A 463-amino-acid chain; its full sequence is Nicotinate phosphoribosyltransferase pncB2 (463 aa).

A Phosphohistidine modification is found at histidine 202.

Belongs to the NAPRTase family. Transiently phosphorylated on a His residue during the reaction cycle. Phosphorylation strongly increases the affinity for substrates and increases the rate of nicotinate D-ribonucleotide production. Dephosphorylation regenerates the low-affinity form of the enzyme, leading to product release.

The catalysed reaction is nicotinate + 5-phospho-alpha-D-ribose 1-diphosphate + ATP + H2O = nicotinate beta-D-ribonucleotide + ADP + phosphate + diphosphate. The protein operates within cofactor biosynthesis; NAD(+) biosynthesis; nicotinate D-ribonucleotide from nicotinate: step 1/1. In terms of biological role, involved in the Preiss-Handler pathway, which is a recycling route that permits the salvage of free nicotinamide (NM) and nicotinic acid (Na) involved in the NAD biosynthesis. Catalyzes the synthesis of beta-nicotinate D-ribonucleotide from nicotinate and 5-phospho-D-ribose 1-phosphate at the expense of ATP. It is not able to use nicotinamide. PncB2 appears to be responsible for the increased salvage synthesis of NAD during infection of host tissues. The polypeptide is Nicotinate phosphoribosyltransferase pncB2 (pncB2) (Mycobacterium tuberculosis (strain CDC 1551 / Oshkosh)).